Reading from the N-terminus, the 459-residue chain is Cysteine--tRNA ligase (459 aa).

Cys31 contacts Zn(2+). A 'HIGH' region motif is present at residues 33 to 43; the sequence is PTVYYNPHIGN. Zn(2+)-binding residues include Cys216, His241, and Glu245. The 'KMSKS' region motif lies at 274 to 278; the sequence is KMSKS. Lys277 contacts ATP.

This sequence belongs to the class-I aminoacyl-tRNA synthetase family. As to quaternary structure, monomer. It depends on Zn(2+) as a cofactor.

The protein resides in the cytoplasm. It carries out the reaction tRNA(Cys) + L-cysteine + ATP = L-cysteinyl-tRNA(Cys) + AMP + diphosphate. The chain is Cysteine--tRNA ligase from Rickettsia peacockii (strain Rustic).